The primary structure comprises 232 residues: Adenosylcobinamide-GDP ribazoletransferase (232 aa).

The next 7 helical transmembrane spans lie at 24–44 (LWAF…ILYL), 46–66 (IPLA…LLHL), 96–116 (IAGV…LSML), 117–137 (PFYA…LGLA), 153–173 (GMNG…YLPV), 174–194 (VIYD…WYVI), and 210–230 (GAMA…SLCF).

The protein belongs to the CobS family. Mg(2+) is required as a cofactor.

The protein resides in the cell membrane. The catalysed reaction is alpha-ribazole + adenosylcob(III)inamide-GDP = adenosylcob(III)alamin + GMP + H(+). It carries out the reaction alpha-ribazole 5'-phosphate + adenosylcob(III)inamide-GDP = adenosylcob(III)alamin 5'-phosphate + GMP + H(+). It functions in the pathway cofactor biosynthesis; adenosylcobalamin biosynthesis; adenosylcobalamin from cob(II)yrinate a,c-diamide: step 7/7. Its function is as follows. Joins adenosylcobinamide-GDP and alpha-ribazole to generate adenosylcobalamin (Ado-cobalamin). Also synthesizes adenosylcobalamin 5'-phosphate from adenosylcobinamide-GDP and alpha-ribazole 5'-phosphate. The protein is Adenosylcobinamide-GDP ribazoletransferase of Pyrococcus abyssi (strain GE5 / Orsay).